The following is a 445-amino-acid chain: Exodeoxyribonuclease 7 large subunit (445 aa).

Belongs to the XseA family. In terms of assembly, heterooligomer composed of large and small subunits.

It localises to the cytoplasm. The catalysed reaction is Exonucleolytic cleavage in either 5'- to 3'- or 3'- to 5'-direction to yield nucleoside 5'-phosphates.. Functionally, bidirectionally degrades single-stranded DNA into large acid-insoluble oligonucleotides, which are then degraded further into small acid-soluble oligonucleotides. This chain is Exodeoxyribonuclease 7 large subunit, found in Shewanella oneidensis (strain ATCC 700550 / JCM 31522 / CIP 106686 / LMG 19005 / NCIMB 14063 / MR-1).